Reading from the N-terminus, the 144-residue chain is Large ribosomal subunit protein uL13 (144 aa).

The protein belongs to the universal ribosomal protein uL13 family. As to quaternary structure, part of the 50S ribosomal subunit.

This protein is one of the early assembly proteins of the 50S ribosomal subunit, although it is not seen to bind rRNA by itself. It is important during the early stages of 50S assembly. This Mycoplasmopsis pulmonis (strain UAB CTIP) (Mycoplasma pulmonis) protein is Large ribosomal subunit protein uL13.